We begin with the raw amino-acid sequence, 196 residues long: Holliday junction branch migration complex subunit RuvA (196 aa).

The tract at residues 1–63 (MISFVSGRVA…EDSLTLYGFA (63 aa)) is domain I. Positions 64–136 (DDDERTVFEL…LKDRLGTPST (73 aa)) are domain II. The flexible linker stretch occupies residues 136–140 (TAAAE). A domain III region spans residues 141–196 (STSGWRDAVHAGLLNLGYTARQADEAIAAIAGELDDSAAVDTATALRLALATLKRP).

It belongs to the RuvA family. Homotetramer. Forms an RuvA(8)-RuvB(12)-Holliday junction (HJ) complex. HJ DNA is sandwiched between 2 RuvA tetramers; dsDNA enters through RuvA and exits via RuvB. An RuvB hexamer assembles on each DNA strand where it exits the tetramer. Each RuvB hexamer is contacted by two RuvA subunits (via domain III) on 2 adjacent RuvB subunits; this complex drives branch migration. In the full resolvosome a probable DNA-RuvA(4)-RuvB(12)-RuvC(2) complex forms which resolves the HJ.

The protein localises to the cytoplasm. In terms of biological role, the RuvA-RuvB-RuvC complex processes Holliday junction (HJ) DNA during genetic recombination and DNA repair, while the RuvA-RuvB complex plays an important role in the rescue of blocked DNA replication forks via replication fork reversal (RFR). RuvA specifically binds to HJ cruciform DNA, conferring on it an open structure. The RuvB hexamer acts as an ATP-dependent pump, pulling dsDNA into and through the RuvAB complex. HJ branch migration allows RuvC to scan DNA until it finds its consensus sequence, where it cleaves and resolves the cruciform DNA. In Acidothermus cellulolyticus (strain ATCC 43068 / DSM 8971 / 11B), this protein is Holliday junction branch migration complex subunit RuvA.